The chain runs to 480 residues: Glutamyl-tRNA(Gln) amidotransferase subunit A (480 aa).

Active-site charge relay system residues include Lys74 and Ser149. Residue Ser173 is the Acyl-ester intermediate of the active site.

The protein belongs to the amidase family. GatA subfamily. In terms of assembly, heterotrimer of A, B and C subunits.

The catalysed reaction is L-glutamyl-tRNA(Gln) + L-glutamine + ATP + H2O = L-glutaminyl-tRNA(Gln) + L-glutamate + ADP + phosphate + H(+). In terms of biological role, allows the formation of correctly charged Gln-tRNA(Gln) through the transamidation of misacylated Glu-tRNA(Gln) in organisms which lack glutaminyl-tRNA synthetase. The reaction takes place in the presence of glutamine and ATP through an activated gamma-phospho-Glu-tRNA(Gln). This chain is Glutamyl-tRNA(Gln) amidotransferase subunit A, found in Vesicomyosocius okutanii subsp. Calyptogena okutanii (strain HA).